Here is a 134-residue protein sequence, read N- to C-terminus: TSC22 domain family protein 3 (134 aa).

N-acetylmethionine is present on Met-1. The AP1-binding stretch occupies residues 1–60; it reads MNTEMYQTPMEVAVYQLHNFSISFFSSLLGGDVVSVKLDNSASGASVVAIDNKIEQAMDL. 2 positions are modified to phosphoserine: Ala-42 and Val-73. The tract at residues 76 to 97 is leucine-zipper; it reads LKEQIRELVEKNSQLERENTLL. Phosphoserine is present on Ser-102. The disordered stretch occupies residues 108–134; it reads KFQSCLSPEEPAPESPQVPEAPGGSAV.

Belongs to the TSC-22/Dip/Bun family. In terms of assembly, can form homodimers, however it is likely to function as a monomer. Interacts with NFKB1. Interacts (via N-terminus) with JUN and FOS; these interactions inhibit the binding of active AP1 to its target DNA. As to quaternary structure, interacts with MYOD1. Interacts with HDAC1; this interaction affects HDAC1 activity on MYOG promoter and thus inhibits MYOD1 transcriptional activity. As to expression, ubiquitously expressed, including in the fetal brain and liver. Expressed in brain, lung, spleen and skeletal muscle. Lower levels detected in heart and kidney. Not detected in the pancreas. In non-lymphoid tissues, in the absence of inflammation, the major source of constitutive expression is the macrophage lineage. Also expressed in cells from different hemopoietic cell lineages, including bone marrow cells, CD34+ stem cells, mature B- and T-cells, monocytes and granulocytes. Down-regulated in activated macrophages from inflammatory lesions of delayed-type hypersensitivity (DTH) reactions, such as in tuberculosis and in Crohn disease, whereas in Burkitt lymphoma, persists in macrophages involved in the phagocytosis of apoptotic malignant cells.

Its subcellular location is the cytoplasm. The protein resides in the nucleus. In terms of biological role, protects T-cells from IL2 deprivation-induced apoptosis through the inhibition of FOXO3A transcriptional activity that leads to the down-regulation of the pro-apoptotic factor BCL2L11. In macrophages, plays a role in the anti-inflammatory and immunosuppressive effects of glucocorticoids and IL10. In T-cells, inhibits anti-CD3-induced NFKB1 nuclear translocation and thereby NFKB1 DNA-binding activities. In vitro, suppresses AP-1 transcription factor complex DNA-binding activities. Its function is as follows. Inhibits myogenic differentiation and mediates anti-myogenic effects of glucocorticoids by binding and regulating MYOD1 and HDAC1 transcriptional activity resulting in reduced expression of MYOG. This chain is TSC22 domain family protein 3, found in Homo sapiens (Human).